The following is a 330-amino-acid chain: Beta-ketoacyl-[acyl-carrier-protein] synthase III (330 aa).

Active-site residues include Cys-115 and His-255. The interval 256-260 (QANFR) is ACP-binding. Asn-285 is a catalytic residue.

It belongs to the thiolase-like superfamily. FabH family. In terms of assembly, homodimer.

The protein localises to the cytoplasm. The enzyme catalyses malonyl-[ACP] + acetyl-CoA + H(+) = 3-oxobutanoyl-[ACP] + CO2 + CoA. It functions in the pathway lipid metabolism; fatty acid biosynthesis. Its function is as follows. Catalyzes the condensation reaction of fatty acid synthesis by the addition to an acyl acceptor of two carbons from malonyl-ACP. Catalyzes the first condensation reaction which initiates fatty acid synthesis and may therefore play a role in governing the total rate of fatty acid production. Possesses both acetoacetyl-ACP synthase and acetyl transacylase activities. Its substrate specificity determines the biosynthesis of branched-chain and/or straight-chain of fatty acids. This is Beta-ketoacyl-[acyl-carrier-protein] synthase III from Helicobacter pylori (strain P12).